The primary structure comprises 173 residues: T-complex protein 1 subunit alpha (173 aa).

This sequence belongs to the TCP-1 chaperonin family. Component of the chaperonin-containing T-complex (TRiC), a heterooligomeric complex of about 850 to 900 kDa that forms two stacked rings, 12 to 16 nm in diameter.

It localises to the cytoplasm. The protein localises to the cytosol. Its function is as follows. Component of the chaperonin-containing T-complex (TRiC), a molecular chaperone complex that assists the folding of proteins upon ATP hydrolysis. In Ambystoma mexicanum (Axolotl), this protein is T-complex protein 1 subunit alpha.